Consider the following 271-residue polypeptide: Acyl-[acyl-carrier-protein]--UDP-N-acetylglucosamine O-acyltransferase (271 aa).

Belongs to the transferase hexapeptide repeat family. LpxA subfamily. As to quaternary structure, homotrimer.

The protein localises to the cytoplasm. It catalyses the reaction a (3R)-hydroxyacyl-[ACP] + UDP-N-acetyl-alpha-D-glucosamine = a UDP-3-O-[(3R)-3-hydroxyacyl]-N-acetyl-alpha-D-glucosamine + holo-[ACP]. The protein operates within glycolipid biosynthesis; lipid IV(A) biosynthesis; lipid IV(A) from (3R)-3-hydroxytetradecanoyl-[acyl-carrier-protein] and UDP-N-acetyl-alpha-D-glucosamine: step 1/6. Involved in the biosynthesis of lipid A, a phosphorylated glycolipid that anchors the lipopolysaccharide to the outer membrane of the cell. The chain is Acyl-[acyl-carrier-protein]--UDP-N-acetylglucosamine O-acyltransferase from Azorhizobium caulinodans (strain ATCC 43989 / DSM 5975 / JCM 20966 / LMG 6465 / NBRC 14845 / NCIMB 13405 / ORS 571).